The chain runs to 258 residues: Regulatory protein RecX (258 aa).

It belongs to the RecX family.

It localises to the cytoplasm. Modulates RecA activity. In Streptococcus uberis (strain ATCC BAA-854 / 0140J), this protein is Regulatory protein RecX.